We begin with the raw amino-acid sequence, 428 residues long: Glutamate-1-semialdehyde 2,1-aminomutase (428 aa).

Lys-267 carries the N6-(pyridoxal phosphate)lysine modification.

Belongs to the class-III pyridoxal-phosphate-dependent aminotransferase family. HemL subfamily. As to quaternary structure, homodimer. Pyridoxal 5'-phosphate is required as a cofactor.

The protein resides in the cytoplasm. The catalysed reaction is (S)-4-amino-5-oxopentanoate = 5-aminolevulinate. Its pathway is porphyrin-containing compound metabolism; protoporphyrin-IX biosynthesis; 5-aminolevulinate from L-glutamyl-tRNA(Glu): step 2/2. This chain is Glutamate-1-semialdehyde 2,1-aminomutase, found in Desulforapulum autotrophicum (strain ATCC 43914 / DSM 3382 / VKM B-1955 / HRM2) (Desulfobacterium autotrophicum).